The chain runs to 198 residues: Ribonuclease 3-like protein 1 (198 aa).

Basic and acidic residues predominate over residues 85-110 (KKLAPKPDEEHTTTTKPISKDDESKT). The interval 85-115 (KKLAPKPDEEHTTTTKPISKDDESKTRRGSA) is disordered. Residues 114 to 191 (SAKSVLHEMC…AEGALWYLEH (78 aa)) enclose the DRBM domain.

This chain is Ribonuclease 3-like protein 1 (RTL1), found in Arabidopsis thaliana (Mouse-ear cress).